Consider the following 270-residue polypeptide: Protein-ADP-ribose hydrolase (270 aa).

One can recognise a Macro domain in the interval 73-267; the sequence is VSVKDCQKTN…LYDTYLQKEN (195 aa). Asp-92, Ile-93, and Asn-106 together coordinate ADP-D-ribose. Zn(2+) is bound by residues Cys-112, His-117, and Cys-119. Cys-119, Ile-120, Asp-121, Ser-212, Thr-213, Gly-214, Glu-215, and Phe-216 together coordinate ADP-D-ribose.

It belongs to the MacroD-type family. Zn-Macro subfamily. Requires Zn(2+) as cofactor.

The enzyme catalyses 4-O-(ADP-D-ribosyl)-L-aspartyl-[protein] + H2O = L-aspartyl-[protein] + ADP-D-ribose + H(+). Its function is as follows. ADP-ribosylhydrolase that specifically reverses the SirTM-mediated mono-ADP-ribosylation at an asparatate residue of GcvH-L, by releasing ADP-ribose from the target protein. May play a role in the regulation of the response to host-induced oxidative stress. In Streptococcus pyogenes serotype M18 (strain MGAS8232), this protein is Protein-ADP-ribose hydrolase.